A 338-amino-acid polypeptide reads, in one-letter code: Holliday junction branch migration complex subunit RuvB (338 aa).

The interval 4–185 (EDQKILDAKP…FGIVAHMQFY (182 aa)) is large ATPase domain (RuvB-L). ATP contacts are provided by residues L24, R25, G66, K69, T70, T71, 132-134 (EDF), R175, Y185, and R222. Residue T70 participates in Mg(2+) binding. The segment at 186 to 256 (PVSDLKLIAK…IVDNALNKLH (71 aa)) is small ATPAse domain (RuvB-S). Positions 259 to 338 (ARGLDETDLK…LQIPYQTGLS (80 aa)) are head domain (RuvB-H). The DNA site is built by R314 and R319.

This sequence belongs to the RuvB family. In terms of assembly, homohexamer. Forms an RuvA(8)-RuvB(12)-Holliday junction (HJ) complex. HJ DNA is sandwiched between 2 RuvA tetramers; dsDNA enters through RuvA and exits via RuvB. An RuvB hexamer assembles on each DNA strand where it exits the tetramer. Each RuvB hexamer is contacted by two RuvA subunits (via domain III) on 2 adjacent RuvB subunits; this complex drives branch migration. In the full resolvosome a probable DNA-RuvA(4)-RuvB(12)-RuvC(2) complex forms which resolves the HJ.

The protein resides in the cytoplasm. The enzyme catalyses ATP + H2O = ADP + phosphate + H(+). Its function is as follows. The RuvA-RuvB-RuvC complex processes Holliday junction (HJ) DNA during genetic recombination and DNA repair, while the RuvA-RuvB complex plays an important role in the rescue of blocked DNA replication forks via replication fork reversal (RFR). RuvA specifically binds to HJ cruciform DNA, conferring on it an open structure. The RuvB hexamer acts as an ATP-dependent pump, pulling dsDNA into and through the RuvAB complex. RuvB forms 2 homohexamers on either side of HJ DNA bound by 1 or 2 RuvA tetramers; 4 subunits per hexamer contact DNA at a time. Coordinated motions by a converter formed by DNA-disengaged RuvB subunits stimulates ATP hydrolysis and nucleotide exchange. Immobilization of the converter enables RuvB to convert the ATP-contained energy into a lever motion, pulling 2 nucleotides of DNA out of the RuvA tetramer per ATP hydrolyzed, thus driving DNA branch migration. The RuvB motors rotate together with the DNA substrate, which together with the progressing nucleotide cycle form the mechanistic basis for DNA recombination by continuous HJ branch migration. Branch migration allows RuvC to scan DNA until it finds its consensus sequence, where it cleaves and resolves cruciform DNA. The polypeptide is Holliday junction branch migration complex subunit RuvB (Oenococcus oeni (strain ATCC BAA-331 / PSU-1)).